The following is a 313-amino-acid chain: Methionyl-tRNA formyltransferase (313 aa).

109-112 lines the (6S)-5,6,7,8-tetrahydrofolate pocket; it reads SLLP.

It belongs to the Fmt family.

It catalyses the reaction L-methionyl-tRNA(fMet) + (6R)-10-formyltetrahydrofolate = N-formyl-L-methionyl-tRNA(fMet) + (6S)-5,6,7,8-tetrahydrofolate + H(+). Its function is as follows. Attaches a formyl group to the free amino group of methionyl-tRNA(fMet). The formyl group appears to play a dual role in the initiator identity of N-formylmethionyl-tRNA by promoting its recognition by IF2 and preventing the misappropriation of this tRNA by the elongation apparatus. The polypeptide is Methionyl-tRNA formyltransferase (Pelotomaculum thermopropionicum (strain DSM 13744 / JCM 10971 / SI)).